The primary structure comprises 269 residues: Shikimate dehydrogenase (NADP(+)) (269 aa).

Shikimate is bound by residues 14-16 (SKS) and Thr-61. Lys-65 functions as the Proton acceptor in the catalytic mechanism. Glu-77 contributes to the NADP(+) binding site. Shikimate is bound by residues Asn-86 and Asp-102. NADP(+)-binding positions include 126 to 130 (GAGGA), 150 to 155 (NRTYEK), and Met-213. Residue Tyr-215 coordinates shikimate. An NADP(+)-binding site is contributed by Gly-237.

It belongs to the shikimate dehydrogenase family. In terms of assembly, homodimer.

The catalysed reaction is shikimate + NADP(+) = 3-dehydroshikimate + NADPH + H(+). The protein operates within metabolic intermediate biosynthesis; chorismate biosynthesis; chorismate from D-erythrose 4-phosphate and phosphoenolpyruvate: step 4/7. Involved in the biosynthesis of the chorismate, which leads to the biosynthesis of aromatic amino acids. Catalyzes the reversible NADPH linked reduction of 3-dehydroshikimate (DHSA) to yield shikimate (SA). The polypeptide is Shikimate dehydrogenase (NADP(+)) (Aliivibrio fischeri (strain ATCC 700601 / ES114) (Vibrio fischeri)).